A 130-amino-acid chain; its full sequence is Small ribosomal subunit protein uS11 (130 aa).

The interval 1 to 21 (MAPQSKRSGGRKQKKHVPNGV) is disordered. Residues 8-17 (SGGRKQKKHV) show a composition bias toward basic residues.

This sequence belongs to the universal ribosomal protein uS11 family. Part of the 30S ribosomal subunit. Interacts with proteins S7 and S18. Binds to IF-3.

Functionally, located on the platform of the 30S subunit, it bridges several disparate RNA helices of the 16S rRNA. Forms part of the Shine-Dalgarno cleft in the 70S ribosome. The polypeptide is Small ribosomal subunit protein uS11 (Acaryochloris marina (strain MBIC 11017)).